Consider the following 462-residue polypeptide: Asparagine--tRNA ligase (462 aa).

The protein belongs to the class-II aminoacyl-tRNA synthetase family. In terms of assembly, homodimer.

The protein localises to the cytoplasm. The catalysed reaction is tRNA(Asn) + L-asparagine + ATP = L-asparaginyl-tRNA(Asn) + AMP + diphosphate + H(+). The chain is Asparagine--tRNA ligase from Thermosynechococcus vestitus (strain NIES-2133 / IAM M-273 / BP-1).